Reading from the N-terminus, the 123-residue chain is MSYAIIEAGGQQLKVEPGRFYDINYLGVDPDSDYTIDKVLLINHEDDITVGQPYVEGATVEGTIVEHRRGRKIIVYKMRPKKKTRKKRGHRQELSRLMITSIKVNGSVIVDDSAVMTETSEEE.

This sequence belongs to the bacterial ribosomal protein bL21 family. In terms of assembly, part of the 50S ribosomal subunit. Contacts protein L20.

Functionally, this protein binds to 23S rRNA in the presence of protein L20. The chain is Large ribosomal subunit protein bL21 from Rippkaea orientalis (strain PCC 8801 / RF-1) (Cyanothece sp. (strain PCC 8801)).